The primary structure comprises 248 residues: Pyridoxine 5'-phosphate synthase (248 aa).

A 3-amino-2-oxopropyl phosphate-binding site is contributed by Asn-12. A 1-deoxy-D-xylulose 5-phosphate-binding site is contributed by 14–15 (DH). Arg-23 lines the 3-amino-2-oxopropyl phosphate pocket. His-48 (proton acceptor) is an active-site residue. 1-deoxy-D-xylulose 5-phosphate-binding residues include Arg-50 and His-55. The active-site Proton acceptor is Glu-75. Thr-105 serves as a coordination point for 1-deoxy-D-xylulose 5-phosphate. The active-site Proton donor is His-196. 3-amino-2-oxopropyl phosphate contacts are provided by residues Gly-197 and 218-219 (GH).

The protein belongs to the PNP synthase family. As to quaternary structure, homooctamer; tetramer of dimers.

The protein localises to the cytoplasm. It carries out the reaction 3-amino-2-oxopropyl phosphate + 1-deoxy-D-xylulose 5-phosphate = pyridoxine 5'-phosphate + phosphate + 2 H2O + H(+). It participates in cofactor biosynthesis; pyridoxine 5'-phosphate biosynthesis; pyridoxine 5'-phosphate from D-erythrose 4-phosphate: step 5/5. Catalyzes the complicated ring closure reaction between the two acyclic compounds 1-deoxy-D-xylulose-5-phosphate (DXP) and 3-amino-2-oxopropyl phosphate (1-amino-acetone-3-phosphate or AAP) to form pyridoxine 5'-phosphate (PNP) and inorganic phosphate. This is Pyridoxine 5'-phosphate synthase from Stutzerimonas stutzeri (strain A1501) (Pseudomonas stutzeri).